Here is a 358-residue protein sequence, read N- to C-terminus: MTRLLIAASGTGGHLFPALAVAEAVEDLWLVSWVGVPDRLETQLVPERFGLVCVNAGGLQGRGLKKLLQLLRLLLASVSVRRAIRRNAIDAVFTTGGYIAAPAILAARWCCIPVVLHESNAIPGRVTRLLGRFCSAVAIGLPAAAKRIPGSQPVLTGTPVRSSFLTPQPLPSWVPHGAGPLLVVMGGSQGAVGLNRMVRAAVPTLLQQGCRVVHLTGDNDPDIEQLQHPQLVERRFSDEIPGLLQHADLAISRAGAGSISELAVCCTPAVLVPFPQAADQHQEANAACAASLGAAVIVHQHEPEQPVLLSTVQRLLAVKLEQPDSASDPLAQMREGMQALAERDAERQLAALLQTLVK.

UDP-N-acetyl-alpha-D-glucosamine is bound by residues threonine 11–glycine 13, asparagine 120, arginine 161, serine 188, and glutamine 282.

It belongs to the glycosyltransferase 28 family. MurG subfamily.

Its subcellular location is the cell inner membrane. It catalyses the reaction di-trans,octa-cis-undecaprenyl diphospho-N-acetyl-alpha-D-muramoyl-L-alanyl-D-glutamyl-meso-2,6-diaminopimeloyl-D-alanyl-D-alanine + UDP-N-acetyl-alpha-D-glucosamine = di-trans,octa-cis-undecaprenyl diphospho-[N-acetyl-alpha-D-glucosaminyl-(1-&gt;4)]-N-acetyl-alpha-D-muramoyl-L-alanyl-D-glutamyl-meso-2,6-diaminopimeloyl-D-alanyl-D-alanine + UDP + H(+). The protein operates within cell wall biogenesis; peptidoglycan biosynthesis. Functionally, cell wall formation. Catalyzes the transfer of a GlcNAc subunit on undecaprenyl-pyrophosphoryl-MurNAc-pentapeptide (lipid intermediate I) to form undecaprenyl-pyrophosphoryl-MurNAc-(pentapeptide)GlcNAc (lipid intermediate II). In Synechococcus sp. (strain CC9605), this protein is UDP-N-acetylglucosamine--N-acetylmuramyl-(pentapeptide) pyrophosphoryl-undecaprenol N-acetylglucosamine transferase.